Reading from the N-terminus, the 598-residue chain is Elongation factor 4 (598 aa).

The tr-type G domain maps to 5-187; it reads ANIRNFSIIA…ALVEFIPAPT (183 aa). Residues 17 to 22 and 134 to 137 contribute to the GTP site; these read DHGKST and NKID.

The protein belongs to the TRAFAC class translation factor GTPase superfamily. Classic translation factor GTPase family. LepA subfamily.

Its subcellular location is the cell inner membrane. It catalyses the reaction GTP + H2O = GDP + phosphate + H(+). Required for accurate and efficient protein synthesis under certain stress conditions. May act as a fidelity factor of the translation reaction, by catalyzing a one-codon backward translocation of tRNAs on improperly translocated ribosomes. Back-translocation proceeds from a post-translocation (POST) complex to a pre-translocation (PRE) complex, thus giving elongation factor G a second chance to translocate the tRNAs correctly. Binds to ribosomes in a GTP-dependent manner. This is Elongation factor 4 from Psychrobacter cryohalolentis (strain ATCC BAA-1226 / DSM 17306 / VKM B-2378 / K5).